A 201-amino-acid chain; its full sequence is GTP cyclohydrolase 1 (201 aa).

Residues Cys90, His93, and Cys163 each coordinate Zn(2+).

It belongs to the GTP cyclohydrolase I family. In terms of assembly, toroid-shaped homodecamer, composed of two pentamers of five dimers.

The enzyme catalyses GTP + H2O = 7,8-dihydroneopterin 3'-triphosphate + formate + H(+). It participates in cofactor biosynthesis; 7,8-dihydroneopterin triphosphate biosynthesis; 7,8-dihydroneopterin triphosphate from GTP: step 1/1. The protein is GTP cyclohydrolase 1 (folE) of Streptomyces coelicolor (strain ATCC BAA-471 / A3(2) / M145).